Here is a 183-residue protein sequence, read N- to C-terminus: Ribosome-recycling factor (183 aa).

Belongs to the RRF family.

The protein localises to the cytoplasm. Its function is as follows. Responsible for the release of ribosomes from messenger RNA at the termination of protein biosynthesis. May increase the efficiency of translation by recycling ribosomes from one round of translation to another. This chain is Ribosome-recycling factor, found in Acetivibrio thermocellus (strain ATCC 27405 / DSM 1237 / JCM 9322 / NBRC 103400 / NCIMB 10682 / NRRL B-4536 / VPI 7372) (Clostridium thermocellum).